A 492-amino-acid polypeptide reads, in one-letter code: Ribose import ATP-binding protein RbsA (492 aa).

2 ABC transporter domains span residues 3-239 (IEMK…VGRS) and 249-492 (AEIR…TGGK). 35–42 (GENGAGKS) contributes to the ATP binding site.

This sequence belongs to the ABC transporter superfamily. Ribose importer (TC 3.A.1.2.1) family. The complex is composed of an ATP-binding protein (RbsA), two transmembrane proteins (RbsC) and a solute-binding protein (RbsB).

The protein resides in the cell membrane. The catalysed reaction is D-ribose(out) + ATP + H2O = D-ribose(in) + ADP + phosphate + H(+). Its function is as follows. Part of the ABC transporter complex RbsABC involved in ribose import. Responsible for energy coupling to the transport system. The chain is Ribose import ATP-binding protein RbsA from Lactococcus lactis subsp. cremoris (strain SK11).